Here is a 389-residue protein sequence, read N- to C-terminus: Chalcone synthase 1 (389 aa).

The active site involves Cys164.

It belongs to the thiolase-like superfamily. Chalcone/stilbene synthases family.

The catalysed reaction is (E)-4-coumaroyl-CoA + 3 malonyl-CoA + 3 H(+) = 2',4,4',6'-tetrahydroxychalcone + 3 CO2 + 4 CoA. It functions in the pathway secondary metabolite biosynthesis; flavonoid biosynthesis. Its function is as follows. The primary product of this enzyme is 4,2',4',6'-tetrahydroxychalcone (also termed naringenin-chalcone or chalcone) which can under specific conditions spontaneously isomerize into naringenin. The protein is Chalcone synthase 1 (CHS1) of Cicer arietinum (Chickpea).